Reading from the N-terminus, the 556-residue chain is MSVSAFNRRWAAVILEALTRHGVRHICIAPGSRSTPLTLAAAENSAFIHHTHFDERGLGHLALGLAKVSKQPVAVIVTSGTAVANLYPALIEAGLTGEKLILLTADRPPELIDCGANQAIRQPGMFASHPTHSISLPRPTQDIPARWLVSTIDHALGTLHAGGVHINCPFAEPLYGEMDDTGLSWQQRLGDWWQDDKPWLREAPRLESEKQRDWFFWRQKRGVVVAGRMSAEEGKKVALWAQTLGWPLIGDVLSQTGQPLPCADLWLGNAKATSELQQTQIVVQLGSSLTGKRLLQWQASCEPEEYWIVDDIEGRLDPAHHRGRRLIANIADWLELHPAEKRQPWCVEIPRLAEQAMQAVIARRDAFGEAQLAHRISDYLPEQGQLFVGNSLVVRLIDALSQLPAGYPVYSNRGASGIDGLLSTAAGVQRASGKPTLAIVGDLSALYDLNALALLRQVSAPLVLIVVNNNGGQIFSLLPTPKNERERFYLMPQNVHFEHAAAMFELKYHRPQNWQELETALVDAWRTPTTTVIEMVVNDTDGAQTLQQLLAQVSHL.

It belongs to the TPP enzyme family. MenD subfamily. As to quaternary structure, homodimer. It depends on Mg(2+) as a cofactor. Mn(2+) is required as a cofactor. Requires thiamine diphosphate as cofactor.

It catalyses the reaction isochorismate + 2-oxoglutarate + H(+) = 5-enolpyruvoyl-6-hydroxy-2-succinyl-cyclohex-3-ene-1-carboxylate + CO2. It participates in quinol/quinone metabolism; 1,4-dihydroxy-2-naphthoate biosynthesis; 1,4-dihydroxy-2-naphthoate from chorismate: step 2/7. Its pathway is quinol/quinone metabolism; menaquinone biosynthesis. In terms of biological role, catalyzes the thiamine diphosphate-dependent decarboxylation of 2-oxoglutarate and the subsequent addition of the resulting succinic semialdehyde-thiamine pyrophosphate anion to isochorismate to yield 2-succinyl-5-enolpyruvyl-6-hydroxy-3-cyclohexene-1-carboxylate (SEPHCHC). The polypeptide is 2-succinyl-5-enolpyruvyl-6-hydroxy-3-cyclohexene-1-carboxylate synthase (Escherichia coli O7:K1 (strain IAI39 / ExPEC)).